A 368-amino-acid chain; its full sequence is DNA replication and repair protein RecF (368 aa).

Residue 30–37 coordinates ATP; sequence GDNGAGKT.

Belongs to the RecF family.

The protein localises to the cytoplasm. In terms of biological role, the RecF protein is involved in DNA metabolism; it is required for DNA replication and normal SOS inducibility. RecF binds preferentially to single-stranded, linear DNA. It also seems to bind ATP. This is DNA replication and repair protein RecF from Xanthomonas euvesicatoria pv. vesicatoria (strain 85-10) (Xanthomonas campestris pv. vesicatoria).